Consider the following 300-residue polypeptide: Cathepsin B-like CP2 (300 aa).

An N-terminal signal peptide occupies residues 1 to 19 (MKLFLLAAAAFSAPALTVS). Cystine bridges form between C88–C115, C98–C141, and C134–C177. The active site involves C101. Residues H245 and N266 contribute to the active site.

This sequence belongs to the peptidase C1 family.

It is found in the vacuole. Thiol protease which is required for parasite excystation and invasion of the proximal small intestine of the human host. The polypeptide is Cathepsin B-like CP2 (CP2) (Giardia intestinalis (Giardia lamblia)).